The chain runs to 279 residues: Proteasome subunit beta (279 aa).

The propeptide at 1 to 56 (MASQAMSWRGEGERVVRDLAAASTSSFVEHLSQSRPDLLPFGQALPAGVLPQTPHA) is removed in mature form; by autocatalysis. Thr-57 (nucleophile) is an active-site residue.

This sequence belongs to the peptidase T1B family. The 20S proteasome core is composed of 14 alpha and 14 beta subunits that assemble into four stacked heptameric rings, resulting in a barrel-shaped structure. The two inner rings, each composed of seven catalytic beta subunits, are sandwiched by two outer rings, each composed of seven alpha subunits. The catalytic chamber with the active sites is on the inside of the barrel. Has a gated structure, the ends of the cylinder being occluded by the N-termini of the alpha-subunits. Is capped by the proteasome-associated ATPase, ARC.

It is found in the cytoplasm. The catalysed reaction is Cleavage of peptide bonds with very broad specificity.. It participates in protein degradation; proteasomal Pup-dependent pathway. With respect to regulation, the formation of the proteasomal ATPase ARC-20S proteasome complex, likely via the docking of the C-termini of ARC into the intersubunit pockets in the alpha-rings, may trigger opening of the gate for substrate entry. Interconversion between the open-gate and close-gate conformations leads to a dynamic regulation of the 20S proteasome proteolysis activity. Component of the proteasome core, a large protease complex with broad specificity involved in protein degradation. The chain is Proteasome subunit beta from Renibacterium salmoninarum (strain ATCC 33209 / DSM 20767 / JCM 11484 / NBRC 15589 / NCIMB 2235).